The sequence spans 362 residues: Malate dehydrogenase (362 aa).

This sequence belongs to the LDH2/MDH2 oxidoreductase family. In terms of assembly, homodimer.

It is found in the cytoplasm. The catalysed reaction is (S)-malate + NAD(+) = oxaloacetate + NADH + H(+). This chain is Malate dehydrogenase (mdh), found in Pyrococcus abyssi (strain GE5 / Orsay).